Here is a 386-residue protein sequence, read N- to C-terminus: Acetylornithine aminotransferase (386 aa).

Pyridoxal 5'-phosphate is bound by residues 96–97 (GA) and Phe123. Arg126 contacts N(2)-acetyl-L-ornithine. Pyridoxal 5'-phosphate is bound at residue 208-211 (DEVQ). N6-(pyridoxal phosphate)lysine is present on Lys237. Ser265 lines the N(2)-acetyl-L-ornithine pocket. Thr266 contacts pyridoxal 5'-phosphate.

It belongs to the class-III pyridoxal-phosphate-dependent aminotransferase family. ArgD subfamily. As to quaternary structure, homodimer. Requires pyridoxal 5'-phosphate as cofactor.

It is found in the cytoplasm. The catalysed reaction is N(2)-acetyl-L-ornithine + 2-oxoglutarate = N-acetyl-L-glutamate 5-semialdehyde + L-glutamate. It participates in amino-acid biosynthesis; L-arginine biosynthesis; N(2)-acetyl-L-ornithine from L-glutamate: step 4/4. This is Acetylornithine aminotransferase from Bacillus anthracis.